Reading from the N-terminus, the 188-residue chain is ATP synthase subunit b (188 aa).

A helical transmembrane segment spans residues I30–P50.

The protein belongs to the ATPase B chain family. In terms of assembly, F-type ATPases have 2 components, F(1) - the catalytic core - and F(0) - the membrane proton channel. F(1) has five subunits: alpha(3), beta(3), gamma(1), delta(1), epsilon(1). F(0) has three main subunits: a(1), b(2) and c(10-14). The alpha and beta chains form an alternating ring which encloses part of the gamma chain. F(1) is attached to F(0) by a central stalk formed by the gamma and epsilon chains, while a peripheral stalk is formed by the delta and b chains.

The protein resides in the cell membrane. Functionally, f(1)F(0) ATP synthase produces ATP from ADP in the presence of a proton or sodium gradient. F-type ATPases consist of two structural domains, F(1) containing the extramembraneous catalytic core and F(0) containing the membrane proton channel, linked together by a central stalk and a peripheral stalk. During catalysis, ATP synthesis in the catalytic domain of F(1) is coupled via a rotary mechanism of the central stalk subunits to proton translocation. Its function is as follows. Component of the F(0) channel, it forms part of the peripheral stalk, linking F(1) to F(0). This Corynebacterium glutamicum (strain R) protein is ATP synthase subunit b.